The sequence spans 93 residues: MFKVNEYFDGTVKSIAFDMTAGPATIGVMAAGEYEFGTSQLEIMHVVAGALTVKLPGSDEWQEYASGSQFTVPANSKFQLKVAQDTAYLCEYR.

This sequence belongs to the nucleoside phosphorylase PpnP family.

It catalyses the reaction a purine D-ribonucleoside + phosphate = a purine nucleobase + alpha-D-ribose 1-phosphate. The enzyme catalyses adenosine + phosphate = alpha-D-ribose 1-phosphate + adenine. The catalysed reaction is cytidine + phosphate = cytosine + alpha-D-ribose 1-phosphate. It carries out the reaction guanosine + phosphate = alpha-D-ribose 1-phosphate + guanine. It catalyses the reaction inosine + phosphate = alpha-D-ribose 1-phosphate + hypoxanthine. The enzyme catalyses thymidine + phosphate = 2-deoxy-alpha-D-ribose 1-phosphate + thymine. The catalysed reaction is uridine + phosphate = alpha-D-ribose 1-phosphate + uracil. It carries out the reaction xanthosine + phosphate = alpha-D-ribose 1-phosphate + xanthine. Its function is as follows. Catalyzes the phosphorolysis of diverse nucleosides, yielding D-ribose 1-phosphate and the respective free bases. Can use uridine, adenosine, guanosine, cytidine, thymidine, inosine and xanthosine as substrates. Also catalyzes the reverse reactions. In Pseudomonas aeruginosa (strain LESB58), this protein is Pyrimidine/purine nucleoside phosphorylase.